A 61-amino-acid polypeptide reads, in one-letter code: Large ribosomal subunit protein bL32 (61 aa).

Residues 1–22 (MAVPKKKTSKSRRDMRRSHHAL) show a composition bias toward basic residues. The disordered stretch occupies residues 1–27 (MAVPKKKTSKSRRDMRRSHHALKPSAY).

This sequence belongs to the bacterial ribosomal protein bL32 family.

This chain is Large ribosomal subunit protein bL32, found in Rhodospirillum rubrum (strain ATCC 11170 / ATH 1.1.1 / DSM 467 / LMG 4362 / NCIMB 8255 / S1).